Reading from the N-terminus, the 179-residue chain is Large ribosomal subunit protein uL15 (179 aa).

This sequence belongs to the universal ribosomal protein uL15 family. Part of the 50S ribosomal subunit.

Binds to the 23S rRNA. In Archaeoglobus fulgidus (strain ATCC 49558 / DSM 4304 / JCM 9628 / NBRC 100126 / VC-16), this protein is Large ribosomal subunit protein uL15.